The chain runs to 251 residues: Pyrroloquinoline-quinone synthase (251 aa).

Belongs to the PqqC family.

The catalysed reaction is 6-(2-amino-2-carboxyethyl)-7,8-dioxo-1,2,3,4,7,8-hexahydroquinoline-2,4-dicarboxylate + 3 O2 = pyrroloquinoline quinone + 2 H2O2 + 2 H2O + H(+). Its pathway is cofactor biosynthesis; pyrroloquinoline quinone biosynthesis. Its function is as follows. Ring cyclization and eight-electron oxidation of 3a-(2-amino-2-carboxyethyl)-4,5-dioxo-4,5,6,7,8,9-hexahydroquinoline-7,9-dicarboxylic-acid to PQQ. The polypeptide is Pyrroloquinoline-quinone synthase (Klebsiella pneumoniae subsp. pneumoniae (strain ATCC 700721 / MGH 78578)).